The primary structure comprises 254 residues: 5'/3'-nucleotidase SurE (254 aa).

The a divalent metal cation site is built by D9, D10, S40, and N93.

Belongs to the SurE nucleotidase family. A divalent metal cation serves as cofactor.

The protein localises to the cytoplasm. The catalysed reaction is a ribonucleoside 5'-phosphate + H2O = a ribonucleoside + phosphate. It carries out the reaction a ribonucleoside 3'-phosphate + H2O = a ribonucleoside + phosphate. It catalyses the reaction [phosphate](n) + H2O = [phosphate](n-1) + phosphate + H(+). Nucleotidase with a broad substrate specificity as it can dephosphorylate various ribo- and deoxyribonucleoside 5'-monophosphates and ribonucleoside 3'-monophosphates with highest affinity to 3'-AMP. Also hydrolyzes polyphosphate (exopolyphosphatase activity) with the preference for short-chain-length substrates (P20-25). Might be involved in the regulation of dNTP and NTP pools, and in the turnover of 3'-mononucleotides produced by numerous intracellular RNases (T1, T2, and F) during the degradation of various RNAs. The protein is 5'/3'-nucleotidase SurE of Yersinia pestis bv. Antiqua (strain Antiqua).